Consider the following 147-residue polypeptide: Hemoglobin subunit beta-2 (147 aa).

One can recognise a Globin domain in the interval 3-147; sequence EWTDSERAII…VVSALGRQYH (145 aa). Heme b contacts are provided by H64 and H93.

Belongs to the globin family. Hb 3 is a heterotetramer of two alpha-2 and two beta-2 chains. As to expression, red blood cells.

Functionally, involved in oxygen transport from gills to the various peripheral tissues. The chain is Hemoglobin subunit beta-2 (hbb2) from Arctogadus glacialis (Arctic cod).